Reading from the N-terminus, the 747-residue chain is UPF0313 protein PA4928 (747 aa).

The region spanning 371 to 640 (AYEMIRFSVN…KSDQQRRLHK (270 aa)) is the Radical SAM core domain. The [4Fe-4S] cluster site is built by Cys-385, Cys-389, and Cys-392. Positions 670-747 (GKHHLVPTYQ…KKSRQPNIPR (78 aa)) are disordered.

The protein belongs to the UPF0313 family. [4Fe-4S] cluster serves as cofactor.

This is UPF0313 protein PA4928 from Pseudomonas aeruginosa (strain ATCC 15692 / DSM 22644 / CIP 104116 / JCM 14847 / LMG 12228 / 1C / PRS 101 / PAO1).